Consider the following 1668-residue polypeptide: Probable histone acetyltransferase HAC-like 1 (1668 aa).

Disordered regions lie at residues 1–34 (MNVG…ADGL), 459–493 (QQQP…SEQG), and 528–551 (KGGQ…HDSQ). The span at 11 to 23 (GQMSGQAPQTNQV) shows a compositional bias: polar residues. Residues 459–469 (QQQPNSQHQQS) show a composition bias toward low complexity. 2 stretches are compositionally biased toward polar residues: residues 470–491 (ILRS…QLSE) and 536–551 (LSSS…HDSQ). A TAZ-type 1 zinc finger spans residues 651 to 732 (AAGNIYYFRQ…DLQCPVCSNA (82 aa)). Residues 886–899 (KETSETAPEVKNEA) show a composition bias toward basic and acidic residues. Residues 886 to 912 (KETSETAPEVKNEANDSTDITVSKSGK) are disordered. The span at 900–909 (NDSTDITVSK) shows a compositional bias: polar residues. The PHD-type zinc-finger motif lies at 1002–1079 (HFFCIPCYNE…EYTCPNCYVE (78 aa)). A CBP/p300-type HAT domain is found at 1094 to 1530 (VLGAKDLPRT…VLYHLHNPTA (437 aa)). Residues 1217 to 1219 (LDS), 1236 to 1237 (RT), and Trp1292 each bind acetyl-CoA. A coiled-coil region spans residues 1342–1365 (GAAEDMINQLRQEEDDRKQQKKGK). The segment at 1412 to 1475 (HLQYSCSHCC…TLHPVDIVGL (64 aa)) adopts a ZZ-type zinc-finger fold. 8 residues coordinate Zn(2+): Cys1417, Cys1420, Cys1432, Cys1435, Cys1441, Cys1444, His1457, and His1465. The segment at 1553–1634 (EVCPDFDLRK…GCNVPRCRDL (82 aa)) adopts a TAZ-type 2 zinc-finger fold. A coiled-coil region spans residues 1630–1650 (RCRDLKEHLRRLQQQSDSRRR).

Its subcellular location is the nucleus. The catalysed reaction is L-lysyl-[protein] + acetyl-CoA = N(6)-acetyl-L-lysyl-[protein] + CoA + H(+). Its function is as follows. Acetyltransferase enzyme. Acetylates histones, giving a specific tag for transcriptional activation. The chain is Probable histone acetyltransferase HAC-like 1 from Oryza sativa subsp. japonica (Rice).